Reading from the N-terminus, the 334-residue chain is Holliday junction branch migration complex subunit RuvB (334 aa).

The interval 4–184 (ADRLIQPQLQ…FGIPLRLEFY (181 aa)) is large ATPase domain (RuvB-L). ATP-binding positions include arginine 24, glycine 65, lysine 68, threonine 69, threonine 70, 131–133 (EDY), arginine 174, tyrosine 184, and arginine 221. Residue threonine 69 participates in Mg(2+) binding. The segment at 185 to 255 (NVKDLSTIVT…VAEHALDLLD (71 aa)) is small ATPAse domain (RuvB-S). Positions 258-334 (GEGFDYMDRK…YLHFGMIKPE (77 aa)) are head domain (RuvB-H). DNA is bound by residues arginine 294, arginine 313, and arginine 318.

This sequence belongs to the RuvB family. In terms of assembly, homohexamer. Forms an RuvA(8)-RuvB(12)-Holliday junction (HJ) complex. HJ DNA is sandwiched between 2 RuvA tetramers; dsDNA enters through RuvA and exits via RuvB. An RuvB hexamer assembles on each DNA strand where it exits the tetramer. Each RuvB hexamer is contacted by two RuvA subunits (via domain III) on 2 adjacent RuvB subunits; this complex drives branch migration. In the full resolvosome a probable DNA-RuvA(4)-RuvB(12)-RuvC(2) complex forms which resolves the HJ.

It localises to the cytoplasm. It carries out the reaction ATP + H2O = ADP + phosphate + H(+). The RuvA-RuvB-RuvC complex processes Holliday junction (HJ) DNA during genetic recombination and DNA repair, while the RuvA-RuvB complex plays an important role in the rescue of blocked DNA replication forks via replication fork reversal (RFR). RuvA specifically binds to HJ cruciform DNA, conferring on it an open structure. The RuvB hexamer acts as an ATP-dependent pump, pulling dsDNA into and through the RuvAB complex. RuvB forms 2 homohexamers on either side of HJ DNA bound by 1 or 2 RuvA tetramers; 4 subunits per hexamer contact DNA at a time. Coordinated motions by a converter formed by DNA-disengaged RuvB subunits stimulates ATP hydrolysis and nucleotide exchange. Immobilization of the converter enables RuvB to convert the ATP-contained energy into a lever motion, pulling 2 nucleotides of DNA out of the RuvA tetramer per ATP hydrolyzed, thus driving DNA branch migration. The RuvB motors rotate together with the DNA substrate, which together with the progressing nucleotide cycle form the mechanistic basis for DNA recombination by continuous HJ branch migration. Branch migration allows RuvC to scan DNA until it finds its consensus sequence, where it cleaves and resolves cruciform DNA. The polypeptide is Holliday junction branch migration complex subunit RuvB (Shewanella sp. (strain MR-4)).